Reading from the N-terminus, the 427-residue chain is Serine protease inhibitor 88Ea (427 aa).

A signal peptide spans 1-18; that stretch reads MHILSISLMAVLPAIALA. Asparagine 224 carries N-linked (GlcNAc...) asparagine glycosylation.

Belongs to the serpin family. In terms of tissue distribution, expressed in nurse cells and oocytes. Expressed in wings.

The protein localises to the secreted. Serine protease inhibitor with activity toward trypsin. Negatively regulates the Toll signaling pathway and suppresses the expression of the antifungal peptide drosomycin. Its negative regulation of the Toll signaling pathway also results in the inhibition of the melanization immune response via the phenoloxidase (PPO1) cascade. Essential for unfolding and expansion of the wings after emergence from the pupal case. May regulate the Toll pathway by blocking the proteolysis of the Toll ligand spz. In Drosophila melanogaster (Fruit fly), this protein is Serine protease inhibitor 88Ea.